A 133-amino-acid polypeptide reads, in one-letter code: Large-conductance mechanosensitive channel (133 aa).

Helical transmembrane passes span 19 to 39 (IDLA…TSLV) and 79 to 99 (IQSV…VKLI).

It belongs to the MscL family. As to quaternary structure, homopentamer.

The protein localises to the cell membrane. Functionally, channel that opens in response to stretch forces in the membrane lipid bilayer. May participate in the regulation of osmotic pressure changes within the cell. This chain is Large-conductance mechanosensitive channel, found in Clostridium tetani (strain Massachusetts / E88).